The chain runs to 162 residues: Peptide deformylase-like (162 aa).

It belongs to the polypeptide deformylase family.

This is Peptide deformylase-like from Staphylococcus epidermidis (strain ATCC 35984 / DSM 28319 / BCRC 17069 / CCUG 31568 / BM 3577 / RP62A).